A 74-amino-acid chain; its full sequence is NADH dehydrogenase [ubiquinone] 1 alpha subcomplex assembly factor 8 (74 aa).

Positions 22–69 constitute a CHCH domain; that stretch reads LAACGAEASAYGKCVQASTAPGGRLSKDLCVREFEALRSCFAAAAKKT. 2 short sequence motifs (cx9C motif) span residues 25-35 and 51-61; these read CGAEASAYGKC and CVREFEALRSC. Intrachain disulfides connect Cys25/Cys61 and Cys35/Cys51.

Interacts with NDUFAF5.

The protein resides in the mitochondrion. Involved in the assembly of mitochondrial NADH:ubiquinone oxidoreductase complex (complex I, MT-ND1). Required to stabilize NDUFAF5. The chain is NADH dehydrogenase [ubiquinone] 1 alpha subcomplex assembly factor 8 from Mus musculus (Mouse).